Reading from the N-terminus, the 113-residue chain is Iron-sulfur cluster insertion protein ErpA (113 aa).

Iron-sulfur cluster-binding residues include C41, C105, and C107.

It belongs to the HesB/IscA family. In terms of assembly, homodimer. It depends on iron-sulfur cluster as a cofactor.

In terms of biological role, required for insertion of 4Fe-4S clusters for at least IspG. This Vibrio vulnificus (strain YJ016) protein is Iron-sulfur cluster insertion protein ErpA.